Reading from the N-terminus, the 272-residue chain is Bis(5'-nucleosyl)-tetraphosphatase, symmetrical (272 aa).

This sequence belongs to the Ap4A hydrolase family.

The catalysed reaction is P(1),P(4)-bis(5'-adenosyl) tetraphosphate + H2O = 2 ADP + 2 H(+). Functionally, hydrolyzes diadenosine 5',5'''-P1,P4-tetraphosphate to yield ADP. This is Bis(5'-nucleosyl)-tetraphosphatase, symmetrical from Shewanella frigidimarina (strain NCIMB 400).